A 717-amino-acid chain; its full sequence is Fatty acid oxidation complex subunit alpha (717 aa).

An enoyl-CoA hydratase/isomerase region spans residues 1-190 (MIHAGNAITV…KDGAVDAVVS (190 aa)). Asp298 provides a ligand contact to substrate. A 3-hydroxyacyl-CoA dehydrogenase region spans residues 313-717 (HPVNQAAVLG…MAENNKKFYG (405 aa)). Residues Met326, Asp345, 402-404 (VTE), Lys409, and Ser431 contribute to the NAD(+) site. The For 3-hydroxyacyl-CoA dehydrogenase activity role is filled by His452. NAD(+) is bound at residue Asn455. Asn502 serves as a coordination point for substrate.

The protein in the N-terminal section; belongs to the enoyl-CoA hydratase/isomerase family. This sequence in the C-terminal section; belongs to the 3-hydroxyacyl-CoA dehydrogenase family. In terms of assembly, heterotetramer of two alpha chains (FadB) and two beta chains (FadA).

The enzyme catalyses a (3S)-3-hydroxyacyl-CoA + NAD(+) = a 3-oxoacyl-CoA + NADH + H(+). It catalyses the reaction a (3S)-3-hydroxyacyl-CoA = a (2E)-enoyl-CoA + H2O. It carries out the reaction a 4-saturated-(3S)-3-hydroxyacyl-CoA = a (3E)-enoyl-CoA + H2O. The catalysed reaction is (3S)-3-hydroxybutanoyl-CoA = (3R)-3-hydroxybutanoyl-CoA. The enzyme catalyses a (3Z)-enoyl-CoA = a 4-saturated (2E)-enoyl-CoA. It catalyses the reaction a (3E)-enoyl-CoA = a 4-saturated (2E)-enoyl-CoA. It participates in lipid metabolism; fatty acid beta-oxidation. Its function is as follows. Involved in the aerobic and anaerobic degradation of long-chain fatty acids via beta-oxidation cycle. Catalyzes the formation of 3-oxoacyl-CoA from enoyl-CoA via L-3-hydroxyacyl-CoA. It can also use D-3-hydroxyacyl-CoA and cis-3-enoyl-CoA as substrate. The protein is Fatty acid oxidation complex subunit alpha of Acinetobacter baylyi (strain ATCC 33305 / BD413 / ADP1).